The following is a 324-amino-acid chain: Geranylgeranyl diphosphate synthase (324 aa).

The isopentenyl diphosphate site is built by K46, R49, and H78. 2 residues coordinate Mg(2+): D85 and D89. An an all-trans-polyprenyl diphosphate-binding site is contributed by R94. An isopentenyl diphosphate-binding site is contributed by R95. An all-trans-polyprenyl diphosphate contacts are provided by K176, T177, Q214, K231, and K241.

Belongs to the FPP/GGPP synthase family. The cofactor is Mg(2+).

It catalyses the reaction isopentenyl diphosphate + (2E,6E)-farnesyl diphosphate = (2E,6E,10E)-geranylgeranyl diphosphate + diphosphate. Its pathway is isoprenoid biosynthesis; geranylgeranyl diphosphate biosynthesis; geranylgeranyl diphosphate from farnesyl diphosphate and isopentenyl diphosphate: step 1/1. In terms of biological role, catalyzes the sequential condensation of isopentenyl pyrophosphate with the allylic pyrophosphates to yield geranylgeranyl diphosphate (GGPP) which is a precursor of the ether-linked lipids. This chain is Geranylgeranyl diphosphate synthase, found in Methanosarcina mazei (strain ATCC BAA-159 / DSM 3647 / Goe1 / Go1 / JCM 11833 / OCM 88) (Methanosarcina frisia).